The chain runs to 212 residues: uncharacterized protein (212 aa).

Residues Gly-53, Glu-74, and Asp-97 each coordinate S-adenosyl-L-methionine.

It belongs to the methyltransferase superfamily. YrrT family.

Functionally, could be a S-adenosyl-L-methionine-dependent methyltransferase. This is an uncharacterized protein from Bacillus cereus (strain 03BB102).